Here is a 221-residue protein sequence, read N- to C-terminus: PKHD-type hydroxylase NATL1_16191 (221 aa).

The Fe2OG dioxygenase domain maps to 80 to 174; the sequence is LIHGVMFTQS…RHVCVGWIQS (95 aa). Fe cation contacts are provided by H98, D100, and H155. R165 provides a ligand contact to 2-oxoglutarate.

Requires Fe(2+) as cofactor. It depends on L-ascorbate as a cofactor.

The protein is PKHD-type hydroxylase NATL1_16191 of Prochlorococcus marinus (strain NATL1A).